Here is an 808-residue protein sequence, read N- to C-terminus: Na(+)/H(+) antiporter 2 (808 aa).

Transmembrane regions (helical) follow at residues 12–32, 36–56, 70–90, 105–125, 128–148, 174–194, 203–223, 244–264, and 267–287; these read HVAYSCVGIFSSIFSLVSLFV, LYIGESMVASIFGLIVGPHCL, ITLEISRILLCLQVFAVSVEL, LLVPVMTSGWLVIALFVWILV, LNFPASLLMGACITATDPVLA, CNDGLAIPFVFLSLDLLLYPG, WICVTILWECIFGSILGCIIG, FLAFYLILALTCAGFGSMLGV, and LLVSFFAGTAFAWDGWFAAKT. Residue Asn-291 is glycosylated (N-linked (GlcNAc...) asparagine). Helical transmembrane passes span 294–314, 319–339, 361–381, 409–429, and 432–452; these read NVIDVLLNYAYFVYLGSILPW, NPDIGLDVWRLILLSLVVIFL, AMFIGHFGPIGVGAVFAAITS, VMACIWPITCFSIMTSVIVHG, and VAVIMLGRYLSTVTLMALPTG. 2 disordered regions span residues 478 to 499 and 541 to 562; these read QRLDKEPSLSPGQIGGRTSGMV and HASTNDSHGTTTANLGTSNGRA. Polar residues predominate over residues 542–561; it reads ASTNDSHGTTTANLGTSNGR. Residues Asn-545 and Asn-602 are each glycosylated (N-linked (GlcNAc...) asparagine). The interval 774–808 is disordered; it reads LHSEDEMADDEAESENDMDYEDSDGPASRFKDHAD. The segment covering 779–797 has biased composition (acidic residues); that stretch reads EMADDEAESENDMDYEDSD.

Belongs to the fungal Na(+)/H(+) exchanger family.

The protein localises to the membrane. Sodium export from cell, takes up external protons in exchange for internal sodium ions. Seems to be poorly expressed. In Zygosaccharomyces rouxii, this protein is Na(+)/H(+) antiporter 2 (SOD22).